The primary structure comprises 547 residues: Chaperonin GroEL (547 aa).

ATP contacts are provided by residues 30-33, K51, 87-91, G415, and D496; these read TLGP and DGTTT. Residues 527 to 547 form a disordered region; the sequence is SDKAEPMPMRGGMGGMGGMDF. Positions 537-547 are enriched in gly residues; that stretch reads GGMGGMGGMDF.

Belongs to the chaperonin (HSP60) family. As to quaternary structure, forms a cylinder of 14 subunits composed of two heptameric rings stacked back-to-back. Interacts with the co-chaperonin GroES.

The protein localises to the cytoplasm. The enzyme catalyses ATP + H2O + a folded polypeptide = ADP + phosphate + an unfolded polypeptide.. Functionally, together with its co-chaperonin GroES, plays an essential role in assisting protein folding. The GroEL-GroES system forms a nano-cage that allows encapsulation of the non-native substrate proteins and provides a physical environment optimized to promote and accelerate protein folding. The sequence is that of Chaperonin GroEL from Rickettsia rickettsii (strain Sheila Smith).